The sequence spans 418 residues: MQNLRHAASEAFQRLGLKQRHLGYEELGELDGVEKPQPHWFHTLQVRRLRVQRGRSNSDPMGGKSFQQEFQWKTGLQFGNATSYLNLEKLGEGTYATVYKGISRINGHLVALKVIHMKTEEGIPFTAIREASLLKGLKHANIVLLHDIIHTRESLTFVFEYVQTDLAQYMIQHPGGLHSYNIRLFMFQLLRGLSYIHGRRILHRDLKPQNLLISYLGELKLADFGLARSKSIPCQTYSAEVVTLWYRPPDVLMGSTDYSTALDIWGAGCIFIEMLQGSPAFPGVADVFEQLLKIWTVIGVPTEEIWPGVSDLPNYKPEWFLPCKPQQFRDVWKRLSQLPYKTEDLAQQMLMMNPKDRISAQDALLHPYFNTLPPPLMHLRDTVSIFKVPGVRLESEARDIFSPSRRTKTPLAPLAKCW.

The region spanning 84–369 (YLNLEKLGEG…AQDALLHPYF (286 aa)) is the Protein kinase domain. Residues 90–98 (LGEGTYATV) and lysine 113 contribute to the ATP site. The active-site Proton acceptor is the aspartate 205.

This sequence belongs to the protein kinase superfamily. CMGC Ser/Thr protein kinase family. CDC2/CDKX subfamily. Mg(2+) serves as cofactor.

It catalyses the reaction L-seryl-[protein] + ATP = O-phospho-L-seryl-[protein] + ADP + H(+). It carries out the reaction L-threonyl-[protein] + ATP = O-phospho-L-threonyl-[protein] + ADP + H(+). Functionally, serine/threonine-protein kinase involved in the control of the eukaryotic cell cycle, whose activity is controlled by an associated cyclin. The polypeptide is Cyclin-dependent kinase 15 (cdk15) (Danio rerio (Zebrafish)).